The primary structure comprises 334 residues: AT-hook motif nuclear-localized protein 2 (334 aa).

Positions 1–21 (METTGEVVKTTTGSDGGVTVV) are enriched in low complexity. Disordered regions lie at residues 1–103 (METT…PTTS) and 109–128 (STTSEKRGKMKPATPTPSSF). Positions 44–54 (SVAPPPPPPPQ) are enriched in pro residues. The segment covering 71-80 (IKKRRGRPRK) has biased composition (basic residues). Positions 72-80 (KKRRGRPRK) match the Bipartite nuclear localization signal motif. A DNA-binding region (a.T hook) is located at residues 72-84 (KKRRGRPRKYGHD). Residues 90–103 (LSPNPISSAAPTTS) are compositionally biased toward polar residues. One can recognise a PPC domain in the interval 147–287 (AANFTPHIIT…PHNHNFMSSP (141 aa)). The span at 306–319 (SSLPISTWTPSFPS) shows a compositional bias: polar residues. The segment at 306 to 334 (SSLPISTWTPSFPSDSRHKHSHDFNITLT) is disordered.

It localises to the nucleus. Its function is as follows. Transcription factor that specifically binds AT-rich DNA sequences related to the nuclear matrix attachment regions (MARs). The polypeptide is AT-hook motif nuclear-localized protein 2 (Arabidopsis thaliana (Mouse-ear cress)).